Consider the following 120-residue polypeptide: MNRTIIEKVRSMLCECGLPKTFRADAANTAVHIINKYPSTAINFHVPDEVWFQSVPTYSYLRRFGCVAYIHCDEGKLKPRAKKGEEKGSYLINRIVSILYTIGIGKTSSPRKASHLGIKG.

The protein localises to the mitochondrion. This is an uncharacterized protein from Arabidopsis thaliana (Mouse-ear cress).